The sequence spans 230 residues: Large ribosomal subunit protein uL1 (230 aa).

It belongs to the universal ribosomal protein uL1 family. As to quaternary structure, part of the 50S ribosomal subunit.

In terms of biological role, binds directly to 23S rRNA. The L1 stalk is quite mobile in the ribosome, and is involved in E site tRNA release. Functionally, protein L1 is also a translational repressor protein, it controls the translation of the L11 operon by binding to its mRNA. This chain is Large ribosomal subunit protein uL1, found in Staphylococcus aureus (strain N315).